Consider the following 388-residue polypeptide: Transcription factor TB1 (388 aa).

Positions 115–173 (RKDRHSKISTAGGMRDRRMRLSLDVARKFFALQDMLGFDKASKTVQWLLNMSKAAIREI) constitute a TCP domain. Disordered stretches follow at residues 180-269 (SVCE…EKNR) and 289-331 (AAGE…VGVS). Residues 187–201 (SSSLSVDGKQQQHSN) are compositionally biased toward polar residues. 2 stretches are compositionally biased toward basic and acidic residues: residues 210-224 (GDHKGAAHGHSDGKK) and 247-269 (VPDKESRAKARERARERTKEKNR). A R domain is found at 250–267 (KESRAKARERARERTKEK). Low complexity predominate over residues 289–314 (AAGEDKSPTSPSNNLNHSSSTNLVST).

In terms of assembly, interacts with MADS57. As to expression, expressed in the axillary bud of the first formed leaf node. Expressed in axillary buds, shoot apical meristem, young leaves, vascular tissues and the tips of crown roots.

It localises to the nucleus. In terms of biological role, probable transcription factor that functions as a negative regulator of lateral branching, presumably through its expression in axillary buds. Involved in the fine tuning of shoot branching. May function as an integrator of multiple signaling pathways to regulate the development of axillary buds. Works partially downstream of strigolactones to inhibit bud outgrowth. Binds to MADS57 to suppress the negative regulation of D14 by MADS57 and balance the expression of D14 for tillering. The sequence is that of Transcription factor TB1 from Oryza sativa subsp. japonica (Rice).